We begin with the raw amino-acid sequence, 200 residues long: MSGFKQHTGLVVPLDTANIDTDAIIPKQFLQKVNRIGFGKHLFHDWRFLDDAGEQPNPEFVMNAPRYQGATVLLARENFGCGSSREHAPWSLADYGIQVMIAPSFADIFYGNSINNQMVPVRLTESEVDEIFQFVEANEGAEVTVDLEAMLVTANNKQYSFEIDEFRRHCLLNGLDNIGLTLQHADKISEYEAKIPSFLK.

It belongs to the LeuD family. LeuD type 1 subfamily. Heterodimer of LeuC and LeuD.

The enzyme catalyses (2R,3S)-3-isopropylmalate = (2S)-2-isopropylmalate. It participates in amino-acid biosynthesis; L-leucine biosynthesis; L-leucine from 3-methyl-2-oxobutanoate: step 2/4. In terms of biological role, catalyzes the isomerization between 2-isopropylmalate and 3-isopropylmalate, via the formation of 2-isopropylmaleate. The polypeptide is 3-isopropylmalate dehydratase small subunit (Aliivibrio fischeri (strain ATCC 700601 / ES114) (Vibrio fischeri)).